A 320-amino-acid polypeptide reads, in one-letter code: o-succinylbenzoate synthase (320 aa).

The active-site Proton donor is the lysine 133. Mg(2+) contacts are provided by aspartate 161, glutamate 190, and aspartate 213. Lysine 235 functions as the Proton acceptor in the catalytic mechanism.

It belongs to the mandelate racemase/muconate lactonizing enzyme family. MenC type 1 subfamily. It depends on a divalent metal cation as a cofactor.

The catalysed reaction is (1R,6R)-6-hydroxy-2-succinyl-cyclohexa-2,4-diene-1-carboxylate = 2-succinylbenzoate + H2O. The protein operates within quinol/quinone metabolism; 1,4-dihydroxy-2-naphthoate biosynthesis; 1,4-dihydroxy-2-naphthoate from chorismate: step 4/7. It participates in quinol/quinone metabolism; menaquinone biosynthesis. Its function is as follows. Converts 2-succinyl-6-hydroxy-2,4-cyclohexadiene-1-carboxylate (SHCHC) to 2-succinylbenzoate (OSB). This chain is o-succinylbenzoate synthase, found in Escherichia coli O157:H7.